The following is a 478-amino-acid chain: Chromosomal replication initiator protein DnaA (478 aa).

The domain I, interacts with DnaA modulators stretch occupies residues 1–71; sequence MNLTHIWKTT…RNALTRVVGY (71 aa). Residues 71-136 form a domain II region; it reads YPVQVQVLIA…LDLASAMRSG (66 aa). The tract at residues 137 to 353 is domain III, AAA+ region; that stretch reads MLNPRYTFAS…GSLNRVAAYA (217 aa). The ATP site is built by G181, G183, K184, and T185. The interval 354 to 478 is domain IV, binds dsDNA; that stretch reads ELNRLPITID…RERIQMMRGL (125 aa).

The protein belongs to the DnaA family. As to quaternary structure, oligomerizes as a right-handed, spiral filament on DNA at oriC.

Its subcellular location is the cytoplasm. Plays an essential role in the initiation and regulation of chromosomal replication. ATP-DnaA binds to the origin of replication (oriC) to initiate formation of the DNA replication initiation complex once per cell cycle. Binds the DnaA box (a 9 base pair repeat at the origin) and separates the double-stranded (ds)DNA. Forms a right-handed helical filament on oriC DNA; dsDNA binds to the exterior of the filament while single-stranded (ss)DNA is stabiized in the filament's interior. The ATP-DnaA-oriC complex binds and stabilizes one strand of the AT-rich DNA unwinding element (DUE), permitting loading of DNA polymerase. After initiation quickly degrades to an ADP-DnaA complex that is not apt for DNA replication. Binds acidic phospholipids. The polypeptide is Chromosomal replication initiator protein DnaA (Chloroflexus aggregans (strain MD-66 / DSM 9485)).